The primary structure comprises 80 residues: Exodeoxyribonuclease 7 small subunit (80 aa).

The protein belongs to the XseB family. Heterooligomer composed of large and small subunits.

It localises to the cytoplasm. The enzyme catalyses Exonucleolytic cleavage in either 5'- to 3'- or 3'- to 5'-direction to yield nucleoside 5'-phosphates.. In terms of biological role, bidirectionally degrades single-stranded DNA into large acid-insoluble oligonucleotides, which are then degraded further into small acid-soluble oligonucleotides. The sequence is that of Exodeoxyribonuclease 7 small subunit from Caulobacter sp. (strain K31).